A 533-amino-acid polypeptide reads, in one-letter code: Bifunctional purine biosynthesis protein PurH (533 aa).

One can recognise an MGS-like domain in the interval 1–148 (MDTPRPIKRA…KNHKDVTIVV (148 aa)).

The protein belongs to the PurH family.

The catalysed reaction is (6R)-10-formyltetrahydrofolate + 5-amino-1-(5-phospho-beta-D-ribosyl)imidazole-4-carboxamide = 5-formamido-1-(5-phospho-D-ribosyl)imidazole-4-carboxamide + (6S)-5,6,7,8-tetrahydrofolate. It carries out the reaction IMP + H2O = 5-formamido-1-(5-phospho-D-ribosyl)imidazole-4-carboxamide. Its pathway is purine metabolism; IMP biosynthesis via de novo pathway; 5-formamido-1-(5-phospho-D-ribosyl)imidazole-4-carboxamide from 5-amino-1-(5-phospho-D-ribosyl)imidazole-4-carboxamide (10-formyl THF route): step 1/1. The protein operates within purine metabolism; IMP biosynthesis via de novo pathway; IMP from 5-formamido-1-(5-phospho-D-ribosyl)imidazole-4-carboxamide: step 1/1. This is Bifunctional purine biosynthesis protein PurH from Colwellia psychrerythraea (strain 34H / ATCC BAA-681) (Vibrio psychroerythus).